Here is a 113-residue protein sequence, read N- to C-terminus: Large ribosomal subunit protein bL19 (113 aa).

Belongs to the bacterial ribosomal protein bL19 family.

In terms of biological role, this protein is located at the 30S-50S ribosomal subunit interface and may play a role in the structure and function of the aminoacyl-tRNA binding site. This Carboxydothermus hydrogenoformans (strain ATCC BAA-161 / DSM 6008 / Z-2901) protein is Large ribosomal subunit protein bL19.